We begin with the raw amino-acid sequence, 349 residues long: GDP-mannose:glycolipid 4-beta-D-mannosyltransferase (349 aa).

The signal sequence occupies residues 1 to 14 (MSASASLPVTRAAA).

The protein belongs to the glycosyltransferase 94 family.

The protein resides in the cell inner membrane. The catalysed reaction is beta-D-GlcA-(1-&gt;2)-alpha-D-Man-(1-&gt;3)-beta-D-Glc-(1-&gt;4)-alpha-D-Glc-di-trans,octa-cis-undecaprenyl diphosphate + GDP-alpha-D-mannose = beta-D-Man-(1-&gt;4)-beta-D-GlcA-(1-&gt;2)-alpha-D-Man-(1-&gt;3)-beta-D-Glc-(1-&gt;4)-alpha-D-Glc-di-trans,octa-cis-undecaprenyl diphosphate + GDP + H(+). The protein operates within glycan biosynthesis; xanthan biosynthesis. In terms of biological role, nonprocessive beta-mannosyltransferase that catalyzes the transfer of a mannose residue from GDP-mannose to glucuronic acid-beta-1,2-mannose-alpha-1,3-glucose-beta-1,4-glucose-PP-polyisoprenyl to form the lipid-linked pentasaccharide repeating unit of xanthan, Man-GlcA-Man-Glc(2)-PP-Pol. Is involved in the biosynthesis of the exopolysaccharide xanthan. In Xanthomonas campestris pv. campestris (strain ATCC 33913 / DSM 3586 / NCPPB 528 / LMG 568 / P 25), this protein is GDP-mannose:glycolipid 4-beta-D-mannosyltransferase (gumI).